The sequence spans 144 residues: MRLNTLSPAEGAKHSAKRLGRGIGSGLGKTGGRGHKGQKSRTGGKVRRGFEGGQMPLYRRLPKFGFTSKIAAVTAEIRLNDLTKVDGNIVTLEALKAANVITKDIQFAKVILAGEINNAVTIRGLRVTQGAKAAIEAAGGSVEE.

The tract at residues 1–51 (MRLNTLSPAEGAKHSAKRLGRGIGSGLGKTGGRGHKGQKSRTGGKVRRGFE) is disordered. A compositionally biased stretch (gly residues) spans 21-31 (RGIGSGLGKTG). Basic residues predominate over residues 32 to 47 (GRGHKGQKSRTGGKVR).

The protein belongs to the universal ribosomal protein uL15 family. In terms of assembly, part of the 50S ribosomal subunit.

In terms of biological role, binds to the 23S rRNA. The sequence is that of Large ribosomal subunit protein uL15 from Actinobacillus succinogenes (strain ATCC 55618 / DSM 22257 / CCUG 43843 / 130Z).